The following is a 165-amino-acid chain: Phosphopantetheine adenylyltransferase (165 aa).

S10 is a substrate binding site. Residues 10–11 and H18 contribute to the ATP site; that span reads SF. Residues K42, L74, and R88 each contribute to the substrate site. Residues 89-91, E99, and 124-130 contribute to the ATP site; these read GLR and YSFISSS.

This sequence belongs to the bacterial CoaD family. As to quaternary structure, homohexamer. The cofactor is Mg(2+).

It localises to the cytoplasm. It catalyses the reaction (R)-4'-phosphopantetheine + ATP + H(+) = 3'-dephospho-CoA + diphosphate. The protein operates within cofactor biosynthesis; coenzyme A biosynthesis; CoA from (R)-pantothenate: step 4/5. Functionally, reversibly transfers an adenylyl group from ATP to 4'-phosphopantetheine, yielding dephospho-CoA (dPCoA) and pyrophosphate. The sequence is that of Phosphopantetheine adenylyltransferase from Macrococcus caseolyticus (strain JCSC5402) (Macrococcoides caseolyticum).